Here is a 353-residue protein sequence, read N- to C-terminus: Photosystem II D2 protein (353 aa).

The residue at position 2 (threonine 2) is an N-acetylthreonine. Threonine 2 carries the post-translational modification Phosphothreonine. Residues cysteine 41–threonine 61 form a helical membrane-spanning segment. Histidine 118 contributes to the chlorophyll a binding site. The helical transmembrane segment at glycine 125–proline 141 threads the bilayer. Positions 130 and 143 each coordinate pheophytin a. A helical membrane pass occupies residues valine 153–serine 166. Histidine 198 contacts chlorophyll a. A helical membrane pass occupies residues alanine 208–aspartate 228. A plastoquinone-binding residues include histidine 215 and phenylalanine 262. Histidine 215 is a binding site for Fe cation. Histidine 269 contacts Fe cation. The chain crosses the membrane as a helical span at residues glycine 279–arginine 295.

It belongs to the reaction center PufL/M/PsbA/D family. PSII is composed of 1 copy each of membrane proteins PsbA, PsbB, PsbC, PsbD, PsbE, PsbF, PsbH, PsbI, PsbJ, PsbK, PsbL, PsbM, PsbT, PsbX, PsbY, PsbZ, Psb30/Ycf12, at least 3 peripheral proteins of the oxygen-evolving complex and a large number of cofactors. It forms dimeric complexes. Requires The D1/D2 heterodimer binds P680, chlorophylls that are the primary electron donor of PSII, and subsequent electron acceptors. It shares a non-heme iron and each subunit binds pheophytin, quinone, additional chlorophylls, carotenoids and lipids. There is also a Cl(-1) ion associated with D1 and D2, which is required for oxygen evolution. The PSII complex binds additional chlorophylls, carotenoids and specific lipids. as cofactor.

It is found in the plastid. It localises to the chloroplast thylakoid membrane. The enzyme catalyses 2 a plastoquinone + 4 hnu + 2 H2O = 2 a plastoquinol + O2. Functionally, photosystem II (PSII) is a light-driven water:plastoquinone oxidoreductase that uses light energy to abstract electrons from H(2)O, generating O(2) and a proton gradient subsequently used for ATP formation. It consists of a core antenna complex that captures photons, and an electron transfer chain that converts photonic excitation into a charge separation. The D1/D2 (PsbA/PsbD) reaction center heterodimer binds P680, the primary electron donor of PSII as well as several subsequent electron acceptors. D2 is needed for assembly of a stable PSII complex. This is Photosystem II D2 protein from Cryptomeria japonica (Japanese cedar).